We begin with the raw amino-acid sequence, 478 residues long: Probable cytosolic Fe-S cluster assembly factor AAEL012261 (478 aa).

Residues Cys-23, Cys-69, Cys-72, Cys-75, Cys-189, Cys-245, Cys-396, and Cys-400 each coordinate [4Fe-4S] cluster.

Belongs to the NARF family.

In terms of biological role, component of the cytosolic iron-sulfur (Fe/S) protein assembly machinery. Required for maturation of extramitochondrial Fe/S proteins. This chain is Probable cytosolic Fe-S cluster assembly factor AAEL012261, found in Aedes aegypti (Yellowfever mosquito).